The following is an 86-amino-acid chain: Cell division topological specificity factor (86 aa).

It belongs to the MinE family.

Its function is as follows. Prevents the cell division inhibition by proteins MinC and MinD at internal division sites while permitting inhibition at polar sites. This ensures cell division at the proper site by restricting the formation of a division septum at the midpoint of the long axis of the cell. This is Cell division topological specificity factor from Rhizobium johnstonii (strain DSM 114642 / LMG 32736 / 3841) (Rhizobium leguminosarum bv. viciae).